Consider the following 203-residue polypeptide: Glycerol-3-phosphate acyltransferase (203 aa).

The next 5 helical transmembrane spans lie at 10–30 (LLLGLTALLAYLLGSVPFGIM), 60–80 (LAAFLTLVLDAGKGAIAVFLA), 88–108 (AAQLAGFAAFLGHCFPVFLGF), 118–138 (LGTLLALAWPIGLAACAIWAI), and 162–182 (FTLGLPSAVVFCAALATLIFL).

This sequence belongs to the PlsY family. In terms of assembly, probably interacts with PlsX.

It localises to the cell inner membrane. It catalyses the reaction an acyl phosphate + sn-glycerol 3-phosphate = a 1-acyl-sn-glycero-3-phosphate + phosphate. It functions in the pathway lipid metabolism; phospholipid metabolism. In terms of biological role, catalyzes the transfer of an acyl group from acyl-phosphate (acyl-PO(4)) to glycerol-3-phosphate (G3P) to form lysophosphatidic acid (LPA). This enzyme utilizes acyl-phosphate as fatty acyl donor, but not acyl-CoA or acyl-ACP. This is Glycerol-3-phosphate acyltransferase from Jannaschia sp. (strain CCS1).